Consider the following 948-residue polypeptide: Bifunctional uridylyltransferase/uridylyl-removing enzyme (948 aa).

The interval 1-372 (METHHIDFST…RFANRSRKIP (372 aa)) is uridylyltransferase. Residues 373-728 (GTVEFVEDRG…VRTDSFHAIT (356 aa)) are uridylyl-removing. Residues 489 to 605 (VDEHLIRAVE…IDFADRVQSL (117 aa)) form the HD domain. ACT domains follow at residues 729–810 (EITV…EVIA) and 840–921 (VIEV…ERMP).

Belongs to the GlnD family. It depends on Mg(2+) as a cofactor.

It carries out the reaction [protein-PII]-L-tyrosine + UTP = [protein-PII]-uridylyl-L-tyrosine + diphosphate. The enzyme catalyses [protein-PII]-uridylyl-L-tyrosine + H2O = [protein-PII]-L-tyrosine + UMP + H(+). With respect to regulation, uridylyltransferase (UTase) activity is inhibited by glutamine, while glutamine activates uridylyl-removing (UR) activity. Modifies, by uridylylation and deuridylylation, the PII regulatory proteins (GlnB and homologs), in response to the nitrogen status of the cell that GlnD senses through the glutamine level. Under low glutamine levels, catalyzes the conversion of the PII proteins and UTP to PII-UMP and PPi, while under higher glutamine levels, GlnD hydrolyzes PII-UMP to PII and UMP (deuridylylation). Thus, controls uridylylation state and activity of the PII proteins, and plays an important role in the regulation of nitrogen fixation and metabolism. This chain is Bifunctional uridylyltransferase/uridylyl-removing enzyme, found in Rhizobium tropici.